A 421-amino-acid chain; its full sequence is Serine hydroxymethyltransferase (421 aa).

(6S)-5,6,7,8-tetrahydrofolate-binding positions include Leu-121 and 125-127 (GHL). An N6-(pyridoxal phosphate)lysine modification is found at Lys-229.

It belongs to the SHMT family. Homodimer. It depends on pyridoxal 5'-phosphate as a cofactor.

It is found in the cytoplasm. It carries out the reaction (6R)-5,10-methylene-5,6,7,8-tetrahydrofolate + glycine + H2O = (6S)-5,6,7,8-tetrahydrofolate + L-serine. The protein operates within one-carbon metabolism; tetrahydrofolate interconversion. Its pathway is amino-acid biosynthesis; glycine biosynthesis; glycine from L-serine: step 1/1. Its function is as follows. Catalyzes the reversible interconversion of serine and glycine with tetrahydrofolate (THF) serving as the one-carbon carrier. This reaction serves as the major source of one-carbon groups required for the biosynthesis of purines, thymidylate, methionine, and other important biomolecules. Also exhibits THF-independent aldolase activity toward beta-hydroxyamino acids, producing glycine and aldehydes, via a retro-aldol mechanism. In Haemophilus influenzae (strain ATCC 51907 / DSM 11121 / KW20 / Rd), this protein is Serine hydroxymethyltransferase.